Reading from the N-terminus, the 204-residue chain is Inactive ribonuclease-like protein 9 (204 aa).

Positions 1 to 26 (MMRTLITTHPLLLLLLLQQLLQPVQF) are cleaved as a signal peptide. Cystine bridges form between Cys97/Cys152, Cys115/Cys167, and Cys122/Cys129. Asn130 and Asn142 each carry an N-linked (GlcNAc...) asparagine glycan.

Belongs to the pancreatic ribonuclease family.

The protein resides in the secreted. Its function is as follows. Does not exhibit any ribonuclease activity. This chain is Inactive ribonuclease-like protein 9 (RNASE9), found in Papio anubis (Olive baboon).